The following is a 4363-amino-acid chain: AM-toxin synthetase AMT1 (4363 aa).

Residues 278 to 670 (AGQAKQRPHA…GSLLYVGRKD (393 aa)) form an adenylation 1 region. Positions 810–887 (APDSVIARQL…ALAAIAKVIP (78 aa)) constitute a Carrier 1 domain. Residue S847 is modified to O-(pantetheine 4'-phosphoryl)serine. The interval 926-1340 (EDVYACTPLQ…TLGQIDVLTS (415 aa)) is condensation 1. The interval 1368 to 1765 (KQARTRPGAI…LGRKDTQIKI (398 aa)) is adenylation 2. Residues 1884 to 1961 (PPVTDMEKHV…DQARHVTLLT (78 aa)) enclose the Carrier 2 domain. The residue at position 1922 (S1922) is an O-(pantetheine 4'-phosphoryl)serine. Residues 1999–2410 (EDVYPCTPLQ…ASPSSSTLVS (412 aa)) are condensation 2. Residues 2448 to 2853 (RKKALAAPQA…GRKDNQVKIR (406 aa)) form an adenylation 3 region. Positions 2977–3053 (LPSTVMEETL…DLAACCTDRR (77 aa)) constitute a Carrier 3 domain. O-(pantetheine 4'-phosphoryl)serine is present on S3014. Residues 3098–3503 (VEDVYPCTPM…ELVSSIETLN (406 aa)) form a condensation 3 region. Residues 3730–3806 (PAVTAMQLAI…SLAVRATENT (77 aa)) enclose the Carrier 4 domain. S3767 carries the post-translational modification O-(pantetheine 4'-phosphoryl)serine. Residues 3850–4204 (QDVLPCTSMQ…GLDEIVEHYA (355 aa)) form a condensation 4 region.

The protein belongs to the NRP synthetase family.

It participates in mycotoxin biosynthesis. In terms of biological role, nonribosomal peptide synthetase; part of the gene clusters that mediate the biosynthesis of AM-toxins, host-selective toxins (HSTs) causing Alternaria blotch on apple, a worldwide distributed disease. AM-toxins are cyclic depsipeptides containing the 3 residues 2-hydroxy-isovaleric acid (2-HIV), dehydroalanine, L-alanine which are common for all 3 AM-toxins I to III. The fourth precursor is L-alpha-amino-methoxyphenyl-valeric acid (L-Amv) for AM-toxin I, L-alpha-amino-phenyl-valeric acid (L-Apv) for AM-toxin II, and L-alpha-amino-hydroxyphenyl-valeric acid (L-Ahv) for AM-toxin III. AM-toxins have two target sites for affecting susceptible apple cells; they cause invagination of the plasma membrane and electrolyte loss, and chloroplast disorganization. The non-ribosomal peptide synthetase AMT1 contains 4 catalytic modules and is responsible for activation of each residue in AM-toxin. The aldo-keto reductase AMT2 catalyzes the conversion of 2-keto-isovaleric acid (2-KIV) to 2-hydroxy-isovaleric acid (2-HIV), one of the precursor residues incorporated by AMT1 during AM-toxin biosynthesis, by reduction of its ketone to an alcohol. The cytochrome P450 monooxygenase AMT3 and the thioesterase AMT4 are also important for AM-toxin production, but their exact function within the AM-toxin biosynthesis are not known yet. Up to 21 proteins (including AMT1 to AMT4) are predicted to be involved in AM-toxin biosynthesis since their expression ishighly up-regulated in AM-toxin-producing cultures. This chain is AM-toxin synthetase AMT1, found in Alternaria alternata (Alternaria rot fungus).